The sequence spans 218 residues: Small ribosomal subunit protein uS3c (218 aa).

The 72-residue stretch at 47–118 (VQKHMRISSG…RLNITITRIA (72 aa)) folds into the KH type-2 domain.

Belongs to the universal ribosomal protein uS3 family. In terms of assembly, part of the 30S ribosomal subunit.

Its subcellular location is the plastid. It localises to the chloroplast. This is Small ribosomal subunit protein uS3c (rps3) from Amborella trichopoda.